The primary structure comprises 377 residues: Queuine tRNA-ribosyltransferase (377 aa).

Catalysis depends on D89, which acts as the Proton acceptor. Substrate-binding positions include 89–93, D143, Q187, and G214; that span reads DSGGF. Residues 245–251 are RNA binding; sequence GVGKPED. Residue D264 is the Nucleophile of the active site. Residues 269 to 273 form an RNA binding; important for wobble base 34 recognition region; it reads TRNAR. Residues C302, C304, C307, and H333 each coordinate Zn(2+).

The protein belongs to the queuine tRNA-ribosyltransferase family. In terms of assembly, homodimer. Within each dimer, one monomer is responsible for RNA recognition and catalysis, while the other monomer binds to the replacement base PreQ1. Requires Zn(2+) as cofactor.

It carries out the reaction 7-aminomethyl-7-carbaguanine + guanosine(34) in tRNA = 7-aminomethyl-7-carbaguanosine(34) in tRNA + guanine. The protein operates within tRNA modification; tRNA-queuosine biosynthesis. Functionally, catalyzes the base-exchange of a guanine (G) residue with the queuine precursor 7-aminomethyl-7-deazaguanine (PreQ1) at position 34 (anticodon wobble position) in tRNAs with GU(N) anticodons (tRNA-Asp, -Asn, -His and -Tyr). Catalysis occurs through a double-displacement mechanism. The nucleophile active site attacks the C1' of nucleotide 34 to detach the guanine base from the RNA, forming a covalent enzyme-RNA intermediate. The proton acceptor active site deprotonates the incoming PreQ1, allowing a nucleophilic attack on the C1' of the ribose to form the product. After dissociation, two additional enzymatic reactions on the tRNA convert PreQ1 to queuine (Q), resulting in the hypermodified nucleoside queuosine (7-(((4,5-cis-dihydroxy-2-cyclopenten-1-yl)amino)methyl)-7-deazaguanosine). This chain is Queuine tRNA-ribosyltransferase, found in Shewanella denitrificans (strain OS217 / ATCC BAA-1090 / DSM 15013).